A 191-amino-acid polypeptide reads, in one-letter code: Corrinoid adenosyltransferase (191 aa).

Residues 10–18, K28, 140–145, and N166 each bind ATP; these read TRTGDNGTT and RRAERS.

This sequence belongs to the Cob(I)alamin adenosyltransferase family.

It is found in the cytoplasm. The enzyme catalyses 2 cob(II)yrinate a,c diamide + reduced [electron-transfer flavoprotein] + 2 ATP = 2 adenosylcob(III)yrinate a,c-diamide + 2 triphosphate + oxidized [electron-transfer flavoprotein] + 3 H(+). It carries out the reaction 2 cob(II)alamin + reduced [electron-transfer flavoprotein] + 2 ATP = 2 adenosylcob(III)alamin + 2 triphosphate + oxidized [electron-transfer flavoprotein] + 3 H(+). The protein operates within cofactor biosynthesis; adenosylcobalamin biosynthesis; adenosylcobalamin from cob(II)yrinate a,c-diamide: step 2/7. This chain is Corrinoid adenosyltransferase, found in Mycobacterium leprae (strain TN).